The sequence spans 461 residues: tRNA modification GTPase MnmE (461 aa).

The (6S)-5-formyl-5,6,7,8-tetrahydrofolate site is built by arginine 27, glutamate 89, and arginine 128. Residues glycine 224–phenylalanine 382 form the TrmE-type G domain. Asparagine 234 lines the K(+) pocket. Residues asparagine 234–serine 239, threonine 253–threonine 259, and aspartate 278–glycine 281 each bind GTP. Serine 238 contributes to the Mg(2+) binding site. Residues threonine 253, valine 255, and threonine 258 each coordinate K(+). Mg(2+) is bound at residue threonine 259. Lysine 461 provides a ligand contact to (6S)-5-formyl-5,6,7,8-tetrahydrofolate.

It belongs to the TRAFAC class TrmE-Era-EngA-EngB-Septin-like GTPase superfamily. TrmE GTPase family. In terms of assembly, homodimer. Heterotetramer of two MnmE and two MnmG subunits. Requires K(+) as cofactor.

Its subcellular location is the cytoplasm. In terms of biological role, exhibits a very high intrinsic GTPase hydrolysis rate. Involved in the addition of a carboxymethylaminomethyl (cmnm) group at the wobble position (U34) of certain tRNAs, forming tRNA-cmnm(5)s(2)U34. The sequence is that of tRNA modification GTPase MnmE from Lactobacillus delbrueckii subsp. bulgaricus (strain ATCC BAA-365 / Lb-18).